The sequence spans 497 residues: Cytochrome P450 71A16 (497 aa).

A helical transmembrane segment spans residues 1 to 21 (MEMMILISLCLTTFLTILLFF). A heme-binding site is contributed by cysteine 439.

The protein belongs to the cytochrome P450 family. Heme serves as cofactor.

The protein localises to the membrane. Its function is as follows. Possesses triterpene oxidizing activity. Catalyzes the C23 hydroxylation of marneral to form 23-hydroxymarneral. Catalyzes the C23 hydroxylation of marnerol to form 23-hydroxymarnerol. The polypeptide is Cytochrome P450 71A16 (CYP71A16) (Arabidopsis thaliana (Mouse-ear cress)).